A 701-amino-acid polypeptide reads, in one-letter code: DNA ligase A (701 aa).

Positions 1–23 are disordered; sequence MSEKATGEVEAELPEHPDADERR. NAD(+)-binding positions include 49–53, 99–100, and Glu-129; these read DAEFD and SL. Lys-131 functions as the N6-AMP-lysine intermediate in the catalytic mechanism. NAD(+) contacts are provided by Arg-152, Glu-192, Lys-308, and Lys-332. Zn(2+) contacts are provided by Cys-426, Cys-429, Cys-445, and Cys-451. The BRCT domain maps to 615–701; that stretch reads SIERTLEGLS…EQGPPVEPAE (87 aa).

The protein belongs to the NAD-dependent DNA ligase family. LigA subfamily. Mg(2+) is required as a cofactor. Mn(2+) serves as cofactor.

It carries out the reaction NAD(+) + (deoxyribonucleotide)n-3'-hydroxyl + 5'-phospho-(deoxyribonucleotide)m = (deoxyribonucleotide)n+m + AMP + beta-nicotinamide D-nucleotide.. In terms of biological role, DNA ligase that catalyzes the formation of phosphodiester linkages between 5'-phosphoryl and 3'-hydroxyl groups in double-stranded DNA using NAD as a coenzyme and as the energy source for the reaction. It is essential for DNA replication and repair of damaged DNA. Probably the only ligase required for non-homologous end joining (NHEJ) repair of 3-overhangs. This is DNA ligase A from Mycolicibacterium smegmatis (strain ATCC 700084 / mc(2)155) (Mycobacterium smegmatis).